A 103-amino-acid chain; its full sequence is Co-chaperonin GroES (103 aa).

It belongs to the GroES chaperonin family. As to quaternary structure, heptamer of 7 subunits arranged in a ring. Interacts with the chaperonin GroEL.

It localises to the cytoplasm. Together with the chaperonin GroEL, plays an essential role in assisting protein folding. The GroEL-GroES system forms a nano-cage that allows encapsulation of the non-native substrate proteins and provides a physical environment optimized to promote and accelerate protein folding. GroES binds to the apical surface of the GroEL ring, thereby capping the opening of the GroEL channel. The protein is Co-chaperonin GroES of Microcystis aeruginosa (strain NIES-843 / IAM M-2473).